A 336-amino-acid chain; its full sequence is MAATMYYDRDVSLSPIEDKLIAIIGYGSQAHAHAQNLRDSGLNVVVGLREGSPSRPKAEQAGLRVTSIEDATREADVIMLLIPDETQPKVYEESIAPNLTAGKALAFGHGFNIHFGRIKPPADVDVFLVAPKGPGHMLRRVYVDGAGMPSIFAVGQDASGNARDLALAYARGIGGTRAGVLETTFKEETETDLFGEQSVLCGGVTHLIQAGFETLVEAGYQPEIAYFETLHEVKLIVDLIYEKGFEGMRHSISNTAEYGDYVTGPRIITDETKATMKDVLSDIQSGKFARDFIHEAESGFPFMKEQRQKMRHHTLEVVGRELRSKMPFISKQELEV.

A KARI N-terminal Rossmann domain is found at 3-183 (ATMYYDRDVS…GGTRAGVLET (181 aa)). NADP(+) is bound by residues 26-29 (YGSQ), Arg49, Ser52, Ser54, and 84-87 (DETQ). Residue His109 is part of the active site. Position 135 (Gly135) interacts with NADP(+). Positions 184-329 (TFKEETETDL…RELRSKMPFI (146 aa)) constitute a KARI C-terminal knotted domain. Positions 192, 196, 228, and 232 each coordinate Mg(2+). Ser253 is a binding site for substrate.

Belongs to the ketol-acid reductoisomerase family. It depends on Mg(2+) as a cofactor.

It catalyses the reaction (2R)-2,3-dihydroxy-3-methylbutanoate + NADP(+) = (2S)-2-acetolactate + NADPH + H(+). The catalysed reaction is (2R,3R)-2,3-dihydroxy-3-methylpentanoate + NADP(+) = (S)-2-ethyl-2-hydroxy-3-oxobutanoate + NADPH + H(+). It participates in amino-acid biosynthesis; L-isoleucine biosynthesis; L-isoleucine from 2-oxobutanoate: step 2/4. It functions in the pathway amino-acid biosynthesis; L-valine biosynthesis; L-valine from pyruvate: step 2/4. Functionally, involved in the biosynthesis of branched-chain amino acids (BCAA). Catalyzes an alkyl-migration followed by a ketol-acid reduction of (S)-2-acetolactate (S2AL) to yield (R)-2,3-dihydroxy-isovalerate. In the isomerase reaction, S2AL is rearranged via a Mg-dependent methyl migration to produce 3-hydroxy-3-methyl-2-ketobutyrate (HMKB). In the reductase reaction, this 2-ketoacid undergoes a metal-dependent reduction by NADPH to yield (R)-2,3-dihydroxy-isovalerate. In Deinococcus geothermalis (strain DSM 11300 / CIP 105573 / AG-3a), this protein is Ketol-acid reductoisomerase (NADP(+)).